The following is a 120-amino-acid chain: MDVSNKVSRALTQEIETLANISRESGSKLWRDIAERLASRRRGYASVNLSKIDKYAKDGDIIVVPGYVLGVGKISKKVTVGAYKFSKTAMEKLSNSGCAFMNISEIAKDNPKGTNVKIMR.

Belongs to the eukaryotic ribosomal protein eL18 family.

This chain is Large ribosomal subunit protein eL18, found in Thermoplasma acidophilum (strain ATCC 25905 / DSM 1728 / JCM 9062 / NBRC 15155 / AMRC-C165).